The chain runs to 621 residues: DNA mismatch repair protein MutL (621 aa).

It belongs to the DNA mismatch repair MutL/HexB family.

Its function is as follows. This protein is involved in the repair of mismatches in DNA. It is required for dam-dependent methyl-directed DNA mismatch repair. May act as a 'molecular matchmaker', a protein that promotes the formation of a stable complex between two or more DNA-binding proteins in an ATP-dependent manner without itself being part of a final effector complex. The polypeptide is DNA mismatch repair protein MutL (Xylella fastidiosa (strain M12)).